Consider the following 499-residue polypeptide: Glycerol kinase (499 aa).

Position 13 (Thr13) interacts with ADP. Thr13, Thr14, and Ser15 together coordinate ATP. Thr13 contributes to the sn-glycerol 3-phosphate binding site. Arg17 contacts ADP. Positions 83, 84, 135, and 244 each coordinate sn-glycerol 3-phosphate. Positions 83, 84, 135, 244, and 245 each coordinate glycerol. The ADP site is built by Thr266 and Gly309. Thr266, Gly309, Gln313, and Gly410 together coordinate ATP. Residues Gly410 and Asn414 each contribute to the ADP site.

This sequence belongs to the FGGY kinase family.

The catalysed reaction is glycerol + ATP = sn-glycerol 3-phosphate + ADP + H(+). It participates in polyol metabolism; glycerol degradation via glycerol kinase pathway; sn-glycerol 3-phosphate from glycerol: step 1/1. Inhibited by fructose 1,6-bisphosphate (FBP). Key enzyme in the regulation of glycerol uptake and metabolism. Catalyzes the phosphorylation of glycerol to yield sn-glycerol 3-phosphate. The protein is Glycerol kinase of Paraburkholderia phytofirmans (strain DSM 17436 / LMG 22146 / PsJN) (Burkholderia phytofirmans).